The chain runs to 49 residues: Large ribosomal subunit protein bL33 (49 aa).

It belongs to the bacterial ribosomal protein bL33 family.

This is Large ribosomal subunit protein bL33 from Syntrophobacter fumaroxidans (strain DSM 10017 / MPOB).